The sequence spans 87 residues: Large ribosomal subunit protein bL27 (87 aa).

Positions 1 to 20 (MAHKKAGGSSRNGRDSESKR) are disordered.

This sequence belongs to the bacterial ribosomal protein bL27 family.

This chain is Large ribosomal subunit protein bL27, found in Thiobacillus denitrificans (strain ATCC 25259 / T1).